The chain runs to 188 residues: GMP synthase [glutamine-hydrolyzing] subunit A (188 aa).

The Glutamine amidotransferase type-1 domain occupies 1–188 (MIVIMDNGGQ…RNFAELCGEL (188 aa)). Catalysis depends on C78, which acts as the Nucleophile. Active-site residues include H165 and E167.

As to quaternary structure, heterodimer composed of a glutamine amidotransferase subunit (A) and a GMP-binding subunit (B).

It carries out the reaction XMP + L-glutamine + ATP + H2O = GMP + L-glutamate + AMP + diphosphate + 2 H(+). It participates in purine metabolism; GMP biosynthesis; GMP from XMP (L-Gln route): step 1/1. Catalyzes the synthesis of GMP from XMP. This Thermococcus kodakarensis (strain ATCC BAA-918 / JCM 12380 / KOD1) (Pyrococcus kodakaraensis (strain KOD1)) protein is GMP synthase [glutamine-hydrolyzing] subunit A.